Consider the following 338-residue polypeptide: MIKQLCKNITICTLALSTTFTVLPATSFAKINSEIKQVSEKNLDGDTKMYTRTATTSDSQKNITQSLQFNFLTEPNYDKETVFIKAKGTIGSGLRILDPNGYWNSTLRWPGSYSVSIQNVDDNNNTNVTDFAPKNQDESREVKYTYGYKTGGDFSINRGGLTGNITKESNYSETISYQQPSYRTLLDQSTSHKGVGWKVEAHLINNMGHDHTRQLTNDSDNRTKSEIFSLTRNGNLWAKDNFTPKDKMPVTVSEGFNPEFLAVMSHDKKDKGKSQFVVHYKRSMDEFKIDWNRHGFWGYWSGENHVDKKEEKLSALYEVDWKTHNVKFVKVLNDNEKK.

The N-terminal stretch at 1–29 (MIKQLCKNITICTLALSTTFTVLPATSFA) is a signal peptide.

It belongs to the aerolysin family.

This is an uncharacterized protein from Staphylococcus aureus (strain USA300).